The chain runs to 331 residues: MQSSVTEFLIPRLVNIEQISMTHVKITLEPLERGFGHTLGNALRRILLSSMPGFAVTEVEIDGILHEYSTKEGVQEDIIEILLNLKGLAIRVYGKDQVYLTLVKTGIGVVTAADINHGNDVEIINLDHIICTLTCKNASISMRIKVQCGRGYVPVISRTNVISDNKENYVGKLLVDACYSPVERMIYKVEAARVEKRTDLDKLVIEMETNGTLDPEEAIRRAATILSNQLESFVYLRDIREPEIKEEKPEFDPILLRPVDDLELTVRSANCLKAEMIHYIGDLVQKTEVELLRTPNLGKKSLTEIKDVLAAKNLSLGMNLENWPPDNILDN.

The segment at 1–237 is alpha N-terminal domain (alpha-NTD); sequence MQSSVTEFLI…NQLESFVYLR (237 aa). Positions 251–331 are alpha C-terminal domain (alpha-CTD); it reads FDPILLRPVD…NWPPDNILDN (81 aa).

This sequence belongs to the RNA polymerase alpha chain family. Homodimer. The RNAP catalytic core consists of 2 alpha, 1 beta, 1 beta' and 1 omega subunit. When a sigma factor is associated with the core the holoenzyme is formed, which can initiate transcription.

The catalysed reaction is RNA(n) + a ribonucleoside 5'-triphosphate = RNA(n+1) + diphosphate. DNA-dependent RNA polymerase catalyzes the transcription of DNA into RNA using the four ribonucleoside triphosphates as substrates. This Buchnera aphidicola subsp. Baizongia pistaciae (strain Bp) protein is DNA-directed RNA polymerase subunit alpha.